The primary structure comprises 214 residues: Octanoyltransferase (214 aa).

The 179-residue stretch at 36 to 214 (GRESEMVWLL…QQKFDTIFLQ (179 aa)) folds into the BPL/LPL catalytic domain. Residues 75 to 82 (RGGKYSYH), 147 to 149 (AFG), and 160 to 162 (GFS) contribute to the substrate site. Residue Cys178 is the Acyl-thioester intermediate of the active site.

It belongs to the LipB family.

The protein localises to the cytoplasm. It catalyses the reaction octanoyl-[ACP] + L-lysyl-[protein] = N(6)-octanoyl-L-lysyl-[protein] + holo-[ACP] + H(+). It functions in the pathway protein modification; protein lipoylation via endogenous pathway; protein N(6)-(lipoyl)lysine from octanoyl-[acyl-carrier-protein]: step 1/2. Functionally, catalyzes the transfer of endogenously produced octanoic acid from octanoyl-acyl-carrier-protein onto the lipoyl domains of lipoate-dependent enzymes. Lipoyl-ACP can also act as a substrate although octanoyl-ACP is likely to be the physiological substrate. This is Octanoyltransferase from Anaplasma marginale (strain Florida).